Consider the following 157-residue polypeptide: MPNIVLSRIDERLIHGQVGVQWVGFAGANLVLVANDEVAEDPVQQNLMEMVLAEGIAVRFWTLQKVIDNIHRAADRQKILLVCKTPADFLTLVKGGVPVNRINVGNMHYANGKQQIAKTVSVDAGDIAAFNDLKTAGVECFVQGVPTEPAVDLFKLL.

Positions 1 to 157 (MPNIVLSRID…EPAVDLFKLL (157 aa)) constitute a PTS EIIB type-4 domain. Catalysis depends on His-15, which acts as the Pros-phosphohistidine intermediate.

It is found in the cytoplasm. In terms of biological role, the phosphoenolpyruvate-dependent sugar phosphotransferase system (sugar PTS), a major carbohydrate active -transport system, catalyzes the phosphorylation of incoming sugar substrates concomitantly with their translocation across the cell membrane. This system is involved in N-acetylgalactosamine transport. The sequence is that of N-acetylgalactosamine-specific phosphotransferase enzyme IIB component 2 (agaV) from Escherichia coli (strain K12).